A 527-amino-acid chain; its full sequence is Probable bifunctional tRNA threonylcarbamoyladenosine biosynthesis protein (527 aa).

The kae1 stretch occupies residues 1–323 (MPDIMPDDGL…YRADEVEVAW (323 aa)). Residues histidine 110, histidine 114, and tyrosine 131 each contribute to the Fe cation site. L-threonylcarbamoyladenylate is bound by residues 131–135 (YASGA), aspartate 163, glycine 176, glutamate 180, and asparagine 256. A Fe cation-binding site is contributed by aspartate 284. The region spanning 333-527 (IGPHEGGVAR…HEVELRGRYL (195 aa)) is the Protein kinase domain. Residues 340 to 348 (VARGAEAVV) and lysine 357 contribute to the ATP site. The active-site Proton acceptor; for kinase activity is aspartate 444.

The protein in the N-terminal section; belongs to the KAE1 / TsaD family. It in the C-terminal section; belongs to the protein kinase superfamily. Tyr protein kinase family. BUD32 subfamily. As to quaternary structure, component of the KEOPS complex that consists of Kae1, Bud32, Cgi121 and Pcc1; the whole complex dimerizes. The cofactor is Fe(2+).

It localises to the cytoplasm. It catalyses the reaction L-seryl-[protein] + ATP = O-phospho-L-seryl-[protein] + ADP + H(+). The enzyme catalyses L-threonyl-[protein] + ATP = O-phospho-L-threonyl-[protein] + ADP + H(+). The catalysed reaction is L-threonylcarbamoyladenylate + adenosine(37) in tRNA = N(6)-L-threonylcarbamoyladenosine(37) in tRNA + AMP + H(+). Functionally, required for the formation of a threonylcarbamoyl group on adenosine at position 37 (t(6)A37) in tRNAs that read codons beginning with adenine. Is a component of the KEOPS complex that is probably involved in the transfer of the threonylcarbamoyl moiety of threonylcarbamoyl-AMP (TC-AMP) to the N6 group of A37. The Kae1 domain likely plays a direct catalytic role in this reaction. The Bud32 domain probably displays kinase activity that regulates Kae1 function. This Methanoculleus marisnigri (strain ATCC 35101 / DSM 1498 / JR1) protein is Probable bifunctional tRNA threonylcarbamoyladenosine biosynthesis protein.